The following is a 412-amino-acid chain: Argininosuccinate synthase (412 aa).

ATP contacts are provided by residues 15 to 23 (AYSGGLDTS) and Ala-42. L-citrulline contacts are provided by Tyr-93 and Ser-98. Gly-123 contacts ATP. Positions 125, 129, and 130 each coordinate L-aspartate. Asn-129 serves as a coordination point for L-citrulline. L-citrulline-binding residues include Arg-133, Ser-185, Ser-194, Glu-270, and Tyr-282.

It belongs to the argininosuccinate synthase family. Type 1 subfamily. Homotetramer.

The protein localises to the cytoplasm. It carries out the reaction L-citrulline + L-aspartate + ATP = 2-(N(omega)-L-arginino)succinate + AMP + diphosphate + H(+). The protein operates within amino-acid biosynthesis; L-arginine biosynthesis; L-arginine from L-ornithine and carbamoyl phosphate: step 2/3. This chain is Argininosuccinate synthase, found in Psychrobacter arcticus (strain DSM 17307 / VKM B-2377 / 273-4).